We begin with the raw amino-acid sequence, 138 residues long: Gas vesicle protein A (138 aa).

Residues 74-138 form a disordered region; it reads EAGPRKDPGL…STSRKKEEQE (65 aa). The segment covering 116 to 129 has biased composition (low complexity); it reads GSSSGSSSGSSSRS.

Belongs to the gas vesicle GvpA family. As to quaternary structure, the gas vesicle shell is 2 nm thick and consists of a single layer of this protein. It forms helical ribs nearly perpendicular to the long axis of the vesicle.

The protein resides in the gas vesicle shell. Its function is as follows. Gas vesicles are hollow, gas filled proteinaceous nanostructures found in some microorganisms. During planktonic growth they allow positioning of the organism at a favorable depth for light or nutrient acquisition. GvpA forms the protein shell. It is not clear what function gas vesicles perform in soil bacteria. In Streptomyces sp. (strain CB03234), this protein is Gas vesicle protein A.